A 377-amino-acid polypeptide reads, in one-letter code: tRNA-splicing endonuclease subunit SEN2 (377 aa).

Residues 119 to 174 (ETEMTLEKVTQQRRLQRLEFKKERAKLERELLELRKKGGHIDEENILLEKQRESLR) are a coiled coil. Residues Tyr289, His297, and Lys328 contribute to the active site.

This sequence belongs to the tRNA-intron endonuclease family. Heterotetramer composed of SEN2, SEN15, SEN34 and SEN54. Interacts directly with SEN54.

It is found in the nucleus. The protein localises to the endomembrane system. The protein resides in the mitochondrion outer membrane. The catalysed reaction is pretRNA = a 3'-half-tRNA molecule with a 5'-OH end + a 5'-half-tRNA molecule with a 2',3'-cyclic phosphate end + an intron with a 2',3'-cyclic phosphate and a 5'-hydroxyl terminus.. Functionally, constitutes one of the two catalytic subunit of the tRNA-splicing endonuclease complex, a complex responsible for identification and cleavage of the splice sites in pre-tRNA. It cleaves pre-tRNA at the 5'- and 3'-splice sites to release the intron. The products are an intron and two tRNA half-molecules bearing 2',3'-cyclic phosphate and 5'-OH termini. There are no conserved sequences at the splice sites, but the intron is invariably located at the same site in the gene, placing the splice sites an invariant distance from the constant structural features of the tRNA body. This subunit may anchor the endonuclease complex to the nuclear membrane. Probably carries the active site for 5'-splice site cleavage. The protein is tRNA-splicing endonuclease subunit SEN2 (SEN2) of Saccharomyces cerevisiae (strain ATCC 204508 / S288c) (Baker's yeast).